The primary structure comprises 420 residues: MINYSKPRGTIDLYNKEMNDFKLLENFLLSTTKRYGFQQIKTPVFEFAELFMKSAGESSDLVSKEMYLFKDKSDRWLALRPEGTAGVIRAVVENKLLLNHPLPLKLMYFEPCFRYERPQAGRQRQFHQFGVEVLGTKNIYYDFELIALADTILKKLMISNYILEINYISSPHNRSLWVKSLQEYFHLHRTELTPLSQERITTNPLRILDDKLESQKLVVKQAPKISHFLSNEEKEEFNLIKKMLDDYNIKYYVNEGLVRGLDYYSGLVFEFISTSPKLLGQSTIIGGGRYGELIKQTGGPNYEGIGFGIGIERLLIALSETNKNILNTDDDKYLIAFFDKELENEAIKLTQILRINNQLNVDIILSSTKADKIFKLAQRLNVKKLIILAKKEWSDKKIILKDLLNFKQDLLSLDEIKGIR.

Belongs to the class-II aminoacyl-tRNA synthetase family. As to quaternary structure, homodimer.

The protein resides in the cytoplasm. The enzyme catalyses tRNA(His) + L-histidine + ATP = L-histidyl-tRNA(His) + AMP + diphosphate + H(+). This chain is Histidine--tRNA ligase, found in Ureaplasma parvum serovar 3 (strain ATCC 27815 / 27 / NCTC 11736).